The sequence spans 181 residues: Dual-action ribosomal maturation protein DarP (181 aa).

Residues 1–24 (MTGIKRPMSQYQDDNEWEDWGPSK) form a disordered region.

The protein belongs to the DarP family.

The protein resides in the cytoplasm. In terms of biological role, member of a network of 50S ribosomal subunit biogenesis factors which assembles along the 30S-50S interface, preventing incorrect 23S rRNA structures from forming. Promotes peptidyl transferase center (PTC) maturation. This chain is Dual-action ribosomal maturation protein DarP, found in Aeromonas hydrophila subsp. hydrophila (strain ATCC 7966 / DSM 30187 / BCRC 13018 / CCUG 14551 / JCM 1027 / KCTC 2358 / NCIMB 9240 / NCTC 8049).